The following is a 66-amino-acid chain: Large ribosomal subunit protein bL35 (66 aa).

Belongs to the bacterial ribosomal protein bL35 family.

The protein is Large ribosomal subunit protein bL35 of Brucella anthropi (strain ATCC 49188 / DSM 6882 / CCUG 24695 / JCM 21032 / LMG 3331 / NBRC 15819 / NCTC 12168 / Alc 37) (Ochrobactrum anthropi).